The following is a 372-amino-acid chain: Alanine racemase (372 aa).

K37 serves as the catalytic Proton acceptor; specific for D-alanine. At K37 the chain carries N6-(pyridoxal phosphate)lysine. R136 contacts substrate. Y265 acts as the Proton acceptor; specific for L-alanine in catalysis. M313 serves as a coordination point for substrate.

Belongs to the alanine racemase family. Requires pyridoxal 5'-phosphate as cofactor.

It carries out the reaction L-alanine = D-alanine. It functions in the pathway amino-acid biosynthesis; D-alanine biosynthesis; D-alanine from L-alanine: step 1/1. Its function is as follows. Catalyzes the interconversion of L-alanine and D-alanine. May also act on other amino acids. The chain is Alanine racemase (alr) from Synechocystis sp. (strain ATCC 27184 / PCC 6803 / Kazusa).